The sequence spans 366 residues: Chorismate synthase (366 aa).

The NADP(+) site is built by Arg-48 and Arg-54. FMN contacts are provided by residues 125–127 (RSS), 241–242 (NA), Gly-285, 300–304 (KPTSS), and Arg-326.

This sequence belongs to the chorismate synthase family. As to quaternary structure, homotetramer. FMNH2 serves as cofactor.

The enzyme catalyses 5-O-(1-carboxyvinyl)-3-phosphoshikimate = chorismate + phosphate. Its pathway is metabolic intermediate biosynthesis; chorismate biosynthesis; chorismate from D-erythrose 4-phosphate and phosphoenolpyruvate: step 7/7. In terms of biological role, catalyzes the anti-1,4-elimination of the C-3 phosphate and the C-6 proR hydrogen from 5-enolpyruvylshikimate-3-phosphate (EPSP) to yield chorismate, which is the branch point compound that serves as the starting substrate for the three terminal pathways of aromatic amino acid biosynthesis. This reaction introduces a second double bond into the aromatic ring system. In Cereibacter sphaeroides (strain ATCC 17029 / ATH 2.4.9) (Rhodobacter sphaeroides), this protein is Chorismate synthase.